Consider the following 365-residue polypeptide: Aspartate-semialdehyde dehydrogenase (365 aa).

NADP(+) contacts are provided by Thr-15, Gly-16, Thr-17, Val-18, Ser-40, Ser-43, Leu-89, and Asp-90. Residue Cys-156 is the Acyl-thioester intermediate of the active site. Gly-188 provides a ligand contact to NADP(+). Catalysis depends on His-255, which acts as the Proton acceptor. Asn-342 is an NADP(+) binding site.

Belongs to the aspartate-semialdehyde dehydrogenase family. In terms of assembly, homotetramer; dimer of dimers.

It is found in the cytoplasm. Its subcellular location is the cytosol. The protein resides in the nucleus. The enzyme catalyses L-aspartate 4-semialdehyde + phosphate + NADP(+) = 4-phospho-L-aspartate + NADPH + H(+). The protein operates within amino-acid biosynthesis; L-methionine biosynthesis via de novo pathway; L-homoserine from L-aspartate: step 2/3. It functions in the pathway amino-acid biosynthesis; L-threonine biosynthesis; L-threonine from L-aspartate: step 2/5. Inhibited by the competitive inhibitor 1,4-benzoquinone and derivates such as 2-chloro-3-methoxy-1,4-naphthoquinone, 2,3-dichloro-1,4-naphthoquinone, 2-chloro-1,4-naphthoquinone, 2-bromo-1,4-naphthoquinone and 2,3-dichloro-5,8-dihydroxy-1,4-naphthoquinone. Functionally, catalyzes the NADPH-dependent formation of L-aspartate 4-semialdehyde (L-ASA) by the reductive dephosphorylation of 4-phospho-L-aspartate. Mediates the second step in the biosynthesis of amino acids that derive from aspartate (the aspartate family of amino acids), including methioinine and threonine, the latter of which is a precursor to isoleucine. The chain is Aspartate-semialdehyde dehydrogenase from Cryptococcus neoformans var. neoformans serotype D (strain JEC21 / ATCC MYA-565) (Filobasidiella neoformans).